The following is a 240-amino-acid chain: Pyridoxine 5'-phosphate synthase (240 aa).

N7 is a 3-amino-2-oxopropyl phosphate binding site. Position 9 to 10 (9 to 10 (DH)) interacts with 1-deoxy-D-xylulose 5-phosphate. 3-amino-2-oxopropyl phosphate is bound at residue R18. H43 (proton acceptor) is an active-site residue. 1-deoxy-D-xylulose 5-phosphate is bound by residues R45 and H50. Catalysis depends on E70, which acts as the Proton acceptor. T100 is a 1-deoxy-D-xylulose 5-phosphate binding site. Residue H191 is the Proton donor of the active site. 3-amino-2-oxopropyl phosphate-binding positions include G192 and 213–214 (GH).

It belongs to the PNP synthase family. Homooctamer; tetramer of dimers.

It is found in the cytoplasm. The catalysed reaction is 3-amino-2-oxopropyl phosphate + 1-deoxy-D-xylulose 5-phosphate = pyridoxine 5'-phosphate + phosphate + 2 H2O + H(+). Its pathway is cofactor biosynthesis; pyridoxine 5'-phosphate biosynthesis; pyridoxine 5'-phosphate from D-erythrose 4-phosphate: step 5/5. Catalyzes the complicated ring closure reaction between the two acyclic compounds 1-deoxy-D-xylulose-5-phosphate (DXP) and 3-amino-2-oxopropyl phosphate (1-amino-acetone-3-phosphate or AAP) to form pyridoxine 5'-phosphate (PNP) and inorganic phosphate. This is Pyridoxine 5'-phosphate synthase from Trichodesmium erythraeum (strain IMS101).